A 321-amino-acid chain; its full sequence is Biotin synthase (321 aa).

The 227-residue stretch at 45–271 folds into the Radical SAM core domain; the sequence is YYGKKVKLNM…INPTKEIRIA (227 aa). Residues Cys-63, Cys-67, and Cys-70 each coordinate [4Fe-4S] cluster. Cys-106, Cys-139, Cys-199, and Arg-269 together coordinate [2Fe-2S] cluster.

It belongs to the radical SAM superfamily. Biotin synthase family. In terms of assembly, homodimer. It depends on [4Fe-4S] cluster as a cofactor. [2Fe-2S] cluster is required as a cofactor.

The catalysed reaction is (4R,5S)-dethiobiotin + (sulfur carrier)-SH + 2 reduced [2Fe-2S]-[ferredoxin] + 2 S-adenosyl-L-methionine = (sulfur carrier)-H + biotin + 2 5'-deoxyadenosine + 2 L-methionine + 2 oxidized [2Fe-2S]-[ferredoxin]. The protein operates within cofactor biosynthesis; biotin biosynthesis; biotin from 7,8-diaminononanoate: step 2/2. Catalyzes the conversion of dethiobiotin (DTB) to biotin by the insertion of a sulfur atom into dethiobiotin via a radical-based mechanism. The sequence is that of Biotin synthase from Staphylococcus epidermidis (strain ATCC 35984 / DSM 28319 / BCRC 17069 / CCUG 31568 / BM 3577 / RP62A).